Reading from the N-terminus, the 160-residue chain is Putative antiporter subunit mnhE2 (160 aa).

3 consecutive transmembrane segments (helical) span residues 23–43 (FKFTTFFAGFLIGLIVIYILH), 55–75 (IWVAIKFLAVYLYQLITSSIS), and 100–120 (SNWAITFLTILIIITPGSTVI).

This sequence belongs to the CPA3 antiporters (TC 2.A.63) subunit E family. May form a heterooligomeric complex that consists of seven subunits: mnhA2, mnhB2, mnhC2, mnhD2, mnhE2, mnhF2 and mnhG2.

It localises to the cell membrane. The sequence is that of Putative antiporter subunit mnhE2 (mnhE2) from Staphylococcus epidermidis (strain ATCC 35984 / DSM 28319 / BCRC 17069 / CCUG 31568 / BM 3577 / RP62A).